The following is a 193-amino-acid chain: MRLCDTDIERHLDEGKIVIEPRPGVERISGVSVDVLLGNEFRVFRDHTAPYIDLSGPNSEMADAIDRVMSDEIHIPDGEAFYLHPGQLALAVTYESVTLPADIVGWLDGRSSLARLGLMVHVTAHRIDPGWSGRIVLEFYNGGKLPLALRPKMKIGALNFEMLSGPAARPYNKRENAKYKSQQGAVASRINQD.

Residues 110–115, Asp-128, 136–138, Tyr-171, Lys-178, and Gln-182 each bind dCTP; these read RSSLAR and VLE. Glu-138 serves as the catalytic Proton donor/acceptor.

Belongs to the dCTP deaminase family. As to quaternary structure, homotrimer.

It catalyses the reaction dCTP + H2O + H(+) = dUTP + NH4(+). The protein operates within pyrimidine metabolism; dUMP biosynthesis; dUMP from dCTP (dUTP route): step 1/2. Catalyzes the deamination of dCTP to dUTP. This is dCTP deaminase from Aeromonas salmonicida (strain A449).